We begin with the raw amino-acid sequence, 63 residues long: DNA gyrase inhibitor YacG (63 aa).

Zn(2+) is bound by residues C9, C12, C28, and C32.

The protein belongs to the DNA gyrase inhibitor YacG family. In terms of assembly, interacts with GyrB. It depends on Zn(2+) as a cofactor.

Functionally, inhibits all the catalytic activities of DNA gyrase by preventing its interaction with DNA. Acts by binding directly to the C-terminal domain of GyrB, which probably disrupts DNA binding by the gyrase. In Salmonella paratyphi A (strain AKU_12601), this protein is DNA gyrase inhibitor YacG.